An 875-amino-acid polypeptide reads, in one-letter code: F-box only protein 41 (875 aa).

Disordered regions lie at residues 85-110, 165-194, and 347-542; these read ESTS…HHHH, SSAC…PSPA, and SSSC…PSRS. Over residues 170–182 the composition is skewed to pro residues; the sequence is TPPPGPGPGPCPG. Residues 183–194 show a composition bias toward low complexity; it reads PASASPASPSPA. A coiled-coil region spans residues 209–351; the sequence is ALEKLEVDRR…QLQVISSSCG (143 aa). The span at 347-356 shows a compositional bias: polar residues; it reads SSSCGSTPSA. Positions 359 to 368 are enriched in gly residues; sequence GRGGGGGGAG. Omega-N-methylarginine is present on Arg-360. The span at 395–416 shows a compositional bias: polar residues; it reads HGSSPSTGASSRVPAASQSSGC. Ser-478 bears the Phosphoserine mark. At Thr-479 the chain carries Phosphothreonine. One can recognise an F-box domain in the interval 496 to 540; the sequence is SEAEGPLDAPRPGPAMAGPLSSCRLSARPEGGSGRGRRAERVSPS. At Ser-762 the chain carries Phosphoserine.

Directly interacts with SKP1 and CUL1.

Substrate-recognition component of the SCF (SKP1-CUL1-F-box protein)-type E3 ubiquitin ligase complex. The protein is F-box only protein 41 (FBXO41) of Homo sapiens (Human).